The chain runs to 427 residues: Adenylosuccinate synthetase (427 aa).

GTP contacts are provided by residues 12-18 (GDEGKGK) and 40-42 (GHT). The Proton acceptor role is filled by aspartate 13. Positions 13 and 40 each coordinate Mg(2+). IMP is bound by residues 13-16 (DEGK), 38-41 (NAGH), threonine 128, arginine 142, glutamine 223, threonine 238, and arginine 302. Histidine 41 serves as the catalytic Proton donor. A substrate-binding site is contributed by 298–304 (TTTGRPR). Residues arginine 304, 330–332 (SID), and 412–414 (SVG) contribute to the GTP site.

Belongs to the adenylosuccinate synthetase family. In terms of assembly, homodimer. Mg(2+) is required as a cofactor.

It localises to the cytoplasm. The catalysed reaction is IMP + L-aspartate + GTP = N(6)-(1,2-dicarboxyethyl)-AMP + GDP + phosphate + 2 H(+). The protein operates within purine metabolism; AMP biosynthesis via de novo pathway; AMP from IMP: step 1/2. In terms of biological role, plays an important role in the de novo pathway of purine nucleotide biosynthesis. Catalyzes the first committed step in the biosynthesis of AMP from IMP. The sequence is that of Adenylosuccinate synthetase from Staphylococcus saprophyticus subsp. saprophyticus (strain ATCC 15305 / DSM 20229 / NCIMB 8711 / NCTC 7292 / S-41).